Consider the following 408-residue polypeptide: Dual-specificity RNA methyltransferase RlmN (408 aa).

The Proton acceptor role is filled by glutamate 126. In terms of domain architecture, Radical SAM core spans 132-373 (EEGRGTLCLS…NQAGYASPIR (242 aa)). An intrachain disulfide couples cysteine 139 to cysteine 384. The [4Fe-4S] cluster site is built by cysteine 146, cysteine 150, and cysteine 153. Residues 210–211 (GE), serine 242, 264–266 (SLH), and asparagine 341 contribute to the S-adenosyl-L-methionine site. Catalysis depends on cysteine 384, which acts as the S-methylcysteine intermediate.

It belongs to the radical SAM superfamily. RlmN family. [4Fe-4S] cluster is required as a cofactor.

The protein resides in the cytoplasm. The catalysed reaction is adenosine(2503) in 23S rRNA + 2 reduced [2Fe-2S]-[ferredoxin] + 2 S-adenosyl-L-methionine = 2-methyladenosine(2503) in 23S rRNA + 5'-deoxyadenosine + L-methionine + 2 oxidized [2Fe-2S]-[ferredoxin] + S-adenosyl-L-homocysteine. It carries out the reaction adenosine(37) in tRNA + 2 reduced [2Fe-2S]-[ferredoxin] + 2 S-adenosyl-L-methionine = 2-methyladenosine(37) in tRNA + 5'-deoxyadenosine + L-methionine + 2 oxidized [2Fe-2S]-[ferredoxin] + S-adenosyl-L-homocysteine. Specifically methylates position 2 of adenine 2503 in 23S rRNA and position 2 of adenine 37 in tRNAs. m2A2503 modification seems to play a crucial role in the proofreading step occurring at the peptidyl transferase center and thus would serve to optimize ribosomal fidelity. The protein is Dual-specificity RNA methyltransferase RlmN of Bartonella henselae (strain ATCC 49882 / DSM 28221 / CCUG 30454 / Houston 1) (Rochalimaea henselae).